The sequence spans 142 residues: Large ribosomal subunit protein uL13 (142 aa).

Belongs to the universal ribosomal protein uL13 family. In terms of assembly, part of the 50S ribosomal subunit.

Functionally, this protein is one of the early assembly proteins of the 50S ribosomal subunit, although it is not seen to bind rRNA by itself. It is important during the early stages of 50S assembly. This chain is Large ribosomal subunit protein uL13, found in Aromatoleum aromaticum (strain DSM 19018 / LMG 30748 / EbN1) (Azoarcus sp. (strain EbN1)).